Consider the following 469-residue polypeptide: Aspartyl/glutamyl-tRNA(Asn/Gln) amidotransferase subunit B (469 aa).

It belongs to the GatB/GatE family. GatB subfamily. Heterotrimer of A, B and C subunits.

It catalyses the reaction L-glutamyl-tRNA(Gln) + L-glutamine + ATP + H2O = L-glutaminyl-tRNA(Gln) + L-glutamate + ADP + phosphate + H(+). The enzyme catalyses L-aspartyl-tRNA(Asn) + L-glutamine + ATP + H2O = L-asparaginyl-tRNA(Asn) + L-glutamate + ADP + phosphate + 2 H(+). Its function is as follows. Allows the formation of correctly charged Asn-tRNA(Asn) or Gln-tRNA(Gln) through the transamidation of misacylated Asp-tRNA(Asn) or Glu-tRNA(Gln) in organisms which lack either or both of asparaginyl-tRNA or glutaminyl-tRNA synthetases. The reaction takes place in the presence of glutamine and ATP through an activated phospho-Asp-tRNA(Asn) or phospho-Glu-tRNA(Gln). The protein is Aspartyl/glutamyl-tRNA(Asn/Gln) amidotransferase subunit B of Methanococcus maripaludis (strain C7 / ATCC BAA-1331).